The primary structure comprises 363 residues: Flagellar P-ring protein 2 (363 aa).

Residues methionine 1 to alanine 18 form the signal peptide.

It belongs to the FlgI family. As to quaternary structure, the basal body constitutes a major portion of the flagellar organelle and consists of four rings (L,P,S, and M) mounted on a central rod.

The protein localises to the periplasm. It localises to the bacterial flagellum basal body. Functionally, assembles around the rod to form the L-ring and probably protects the motor/basal body from shearing forces during rotation. The chain is Flagellar P-ring protein 2 from Cereibacter sphaeroides (strain ATCC 17023 / DSM 158 / JCM 6121 / CCUG 31486 / LMG 2827 / NBRC 12203 / NCIMB 8253 / ATH 2.4.1.) (Rhodobacter sphaeroides).